Here is a 922-residue protein sequence, read N- to C-terminus: ATP-dependent helicase fft3 (922 aa).

Disordered stretches follow at residues 139-177 and 198-224; these read EPKMPSYMDDEEASDSLPLSLSSQSLSSQVTNQKPAPHR and PLSSRKTYEPEADDDSNDDMYSDDDSN. Positions 153–166 are enriched in low complexity; it reads DSLPLSLSSQSLSS. Positions 207 to 223 are enriched in acidic residues; it reads PEADDDSNDDMYSDDDS. 2 positions are modified to phosphoserine: serine 213 and serine 219. Residues 399-567 enclose the Helicase ATP-binding domain; that stretch reads YLLYELKLAG…ISLLAFILPH (169 aa). 412 to 419 is an ATP binding site; that stretch reads DEMGLGKT. A DEGH box motif is present at residues 518-521; the sequence is DEGH. Serine 617 is modified (phosphoserine). One can recognise a Helicase C-terminal domain in the interval 765–922; the sequence is KLKKLLTNAV…ETVEAEDDDD (158 aa).

Belongs to the SNF2/RAD54 helicase family. Interacts with the GDP-bound form of spi1.

It localises to the nucleus. Its subcellular location is the chromosome. It catalyses the reaction ATP + H2O = ADP + phosphate + H(+). Its function is as follows. DNA helicase that possesses intrinsic ATP-dependent nucleosome-remodeling activity and is required for heterochromatin organization. Required for maintaining a heterochromatin chromatin structure at centromeres and subtelomeres by protecting these regions from euchromatin assembly. Enhances the nucleotide exchange activity of the pim1 guanine nucleotide exchange factor and abolishes histone-H3-mediated RanGAP inhibition. Involved in the construction of the centromeres. This is ATP-dependent helicase fft3 (fft3) from Schizosaccharomyces pombe (strain 972 / ATCC 24843) (Fission yeast).